The primary structure comprises 123 residues: WAP four-disulfide core domain protein 5 (123 aa).

The N-terminal stretch at 1-24 (MRIQSLLLLGALLAVGSQLPAVFG) is a signal peptide. WAP domains are found at residues 27–73 (KGEK…CVPR) and 74–121 (VSVK…RDPA). Intrachain disulfides connect C34–C62, C41–C66, C49–C61, C55–C70, C81–C109, C88–C113, C96–C108, and C102–C117.

It is found in the secreted. Its function is as follows. Putative acid-stable proteinase inhibitor. In Papio anubis (Olive baboon), this protein is WAP four-disulfide core domain protein 5 (WFDC5).